Here is a 177-residue protein sequence, read N- to C-terminus: Large ribosomal subunit protein uL6 (177 aa).

The protein belongs to the universal ribosomal protein uL6 family. As to quaternary structure, part of the 50S ribosomal subunit.

In terms of biological role, this protein binds to the 23S rRNA, and is important in its secondary structure. It is located near the subunit interface in the base of the L7/L12 stalk, and near the tRNA binding site of the peptidyltransferase center. This is Large ribosomal subunit protein uL6 from Rickettsia conorii (strain ATCC VR-613 / Malish 7).